Here is a 208-residue protein sequence, read N- to C-terminus: Ribosomal RNA small subunit methyltransferase G (208 aa).

Residues glycine 73, leucine 78, 124–125 (VE), and arginine 139 contribute to the S-adenosyl-L-methionine site.

This sequence belongs to the methyltransferase superfamily. RNA methyltransferase RsmG family.

It localises to the cytoplasm. The catalysed reaction is guanosine(527) in 16S rRNA + S-adenosyl-L-methionine = N(7)-methylguanosine(527) in 16S rRNA + S-adenosyl-L-homocysteine. Functionally, specifically methylates the N7 position of guanine in position 527 of 16S rRNA. This Aeromonas salmonicida (strain A449) protein is Ribosomal RNA small subunit methyltransferase G.